We begin with the raw amino-acid sequence, 712 residues long: Follistatin-like domain-containing protein DDB_G0289517 (712 aa).

A signal peptide spans 1-21 (MKIQTIIQIVLISFLFLNVES). Residue Asn102 is glycosylated (N-linked (GlcNAc...) asparagine). The disordered stretch occupies residues 181 to 400 (DIYNHLNPDS…SSSPVHQDPC (220 aa)). Residues 192 to 203 (QFKDKPNHENHK) show a composition bias toward basic and acidic residues. Basic residues predominate over residues 204-214 (KDKNNKKHKKD). Residues Asn217 and Asn234 are each glycosylated (N-linked (GlcNAc...) asparagine). Residues 220–251 (DKNNNNNNNNNNKKNKTINNNEPNQNQQSNPI) show a composition bias toward low complexity. The segment covering 254–269 (TFNNETPFPWNFKNQD) has biased composition (polar residues). Residues 270 to 281 (QQQQKQEQTQKQ) are compositionally biased toward low complexity. The span at 301-321 (KEPTTHLNTIEPTSFTASASR) shows a compositional bias: polar residues. Residues 330–339 (KDEENIDENN) show a composition bias toward acidic residues. Positions 352-364 (DDKSKKPKDDEKH) are enriched in basic and acidic residues. A glycan (N-linked (GlcNAc...) asparagine) is linked at Asn369. Acidic residues predominate over residues 374-384 (PADDPSIEITE). Residues 386–395 (PTITPSSSPV) are compositionally biased toward polar residues. Follistatin-like domains are found at residues 399-421 (PCKK…AYCK) and 471-494 (TCST…PYCQ). A glycan (N-linked (GlcNAc...) asparagine) is linked at Asn407. 3 N-linked (GlcNAc...) asparagine glycosylation sites follow: Asn505, Asn524, and Asn566. The Follistatin-like 3 domain maps to 596–618 (SCETLLCEGVNSYCVENGGPICK). Residue Asn622 is glycosylated (N-linked (GlcNAc...) asparagine). Follistatin-like domains follow at residues 660–682 (SCSV…PKCY) and 687–710 (ECSN…GACL).

The protein resides in the secreted. The chain is Follistatin-like domain-containing protein DDB_G0289517 from Dictyostelium discoideum (Social amoeba).